The chain runs to 660 residues: MIIANVIRSFSLTLLIFAALLFRPAAAEEFSASFKGTDIQEFINTVSKNLNKTVIIDPSVRGTITVRSYDMLNEEQYYQFFLSVLDVYGFAVINMNNGVLKVVRSKDAKTAAVPVASDAAPGIGDEVVTRVVPLTNVAARDLAPLLRQLNDNAGVGSVVHYEPSNVLLMTGRAAVIKRLLTIVERVDNAGDRSVVTVPLSWASAADVVKLVTELNKDTSKSALPGSMVANVVADERTNAVLVSGEPNSRQRIIAMIKQLDRQQATQGNTKVIYLKYAKASDLVEVLTGISSTMQSEKQAAKPVAALDKNIIIKAHGQTNALIVTAAPDVMNDLERVIAQLDIRRPQVLVEAIIAEVQDADGLNLGIQWANKNAGMTQFTNSGLPISTAIAGANQYNKDGTVSSSLASALSSFNGIAAGFYQGNWAMLLTALSSSTKNDILATPSIVTLDNMEATFNVGQEVPVLTGSQTTSGDNIFNTVERKTVGIKLKVKPQINEGDSVLLEIEQEVSSVADAASSTSSDLGATFNTRTVNNAVLVGSGETVVVGGLLDKSVSDTADKVPLLGDIPVIGALFRSTSKKVSKRNLMLFIRPTVIRDRDEYRQASSGQYTAFNDAQSKQRGKENNDAMLNQDLLEIYPRQDTAAFRQVSAAIDAFNLGGNL.

Positions 1 to 27 (MIIANVIRSFSLTLLIFAALLFRPAAA) are cleaved as a signal peptide. Positions 28-124 (EEFSASFKGT…VASDAAPGIG (97 aa)) are N0. The N1 stretch occupies residues 126 to 190 (EVVTRVVPLT…TIVERVDNAG (65 aa)). The interval 191–264 (DRSVVTVPLS…MIKQLDRQQA (74 aa)) is N2. The tract at residues 267-341 (GNTKVIYLKY…DLERVIAQLD (75 aa)) is N3. The segment at 346-596 (QVLVEAIIAE…LFIRPTVIRD (251 aa)) is secretin. The s domain stretch occupies residues 598–660 (DEYRQASSGQ…IDAFNLGGNL (63 aa)).

This sequence belongs to the bacterial secretin family. GSP D subfamily. In terms of assembly, forms a cylindrical channel with 15 subunits.

The protein localises to the cell outer membrane. Involved in a type II secretion system (T2SS, formerly general secretion pathway, GSP) for the export of proteins. Required for the translocation of pullulanase. This subunit forms the outer membrane channel. The protein is Secretin PulD (pulD) of Klebsiella pneumoniae.